We begin with the raw amino-acid sequence, 400 residues long: FPYQGSSIILESGNVNDYEVVYPRKVTALPKGAVQQKYEDAMQYEFKVNGEPVVLHLEKNKGLFSKDYSEIHYSPDGRRITTHPLVEDHCYYRGHIRNDADSTASISACNGLKGHFKLRGETYLIEPMKISNSEAHAVYKYENVEKEDEAHKMCGVTQNWESYEPIKKASQLIVSTEFQRYMEIVIVVDHSMYTKYKGDSDKIKAWVYEMINTISESYRYLYIDIIVSALEMWSEKDLINVETSAENTLKSFGEWRAKDLIHRISHDNAQLLTATDFDGPTIGLAYVASMCDPKRSVGVVQDHSSVNHLVAITLAHEIAHNLGVHHDEGSCSCGSGYTCIMSPVINSEVIKYFSDCSYIQCREYISKENPPCILNKPLRTDTVSTPVSGNELLEAGKDYD.

Residues Phe-1–Ser-6 form the signal peptide. Residues Ser-7–Thr-176 constitute a propeptide that is removed on maturation. The 198-residue stretch at Arg-180–Pro-377 folds into the Peptidase M12B domain. 2 residues coordinate Ca(2+): Glu-183 and Asp-267. 3 disulfides stabilise this stretch: Cys-291/Cys-372, Cys-331/Cys-356, and Cys-333/Cys-339. Residue His-316 participates in Zn(2+) binding. The active site involves Glu-317. His-320 and His-326 together coordinate Zn(2+). Ca(2+) is bound by residues Cys-372, Asn-375, Val-387, Asn-390, Leu-392, Glu-394, and Asp-400. Positions Leu-378–Asp-400 are excised as a propeptide.

Belongs to the venom metalloproteinase (M12B) family. P-I subfamily. In terms of assembly, monomer. The cofactor is Zn(2+). As to expression, expressed by the venom gland.

Its subcellular location is the secreted. Snake venom metalloproteinase that impairs hemostasis in the envenomed animal. The polypeptide is Snake venom metalloproteinase H1 (Deinagkistrodon acutus (Hundred-pace snake)).